The following is a 327-amino-acid chain: Phenylalanine--tRNA ligase alpha subunit (327 aa).

Glu252 contributes to the Mg(2+) binding site.

This sequence belongs to the class-II aminoacyl-tRNA synthetase family. Phe-tRNA synthetase alpha subunit type 1 subfamily. As to quaternary structure, tetramer of two alpha and two beta subunits. Requires Mg(2+) as cofactor.

The protein localises to the cytoplasm. It catalyses the reaction tRNA(Phe) + L-phenylalanine + ATP = L-phenylalanyl-tRNA(Phe) + AMP + diphosphate + H(+). The polypeptide is Phenylalanine--tRNA ligase alpha subunit (Sodalis glossinidius (strain morsitans)).